Here is a 267-residue protein sequence, read N- to C-terminus: Tryptophan synthase alpha chain (267 aa).

Active-site proton acceptor residues include E49 and D60.

Belongs to the TrpA family. As to quaternary structure, tetramer of two alpha and two beta chains.

The enzyme catalyses (1S,2R)-1-C-(indol-3-yl)glycerol 3-phosphate + L-serine = D-glyceraldehyde 3-phosphate + L-tryptophan + H2O. The protein operates within amino-acid biosynthesis; L-tryptophan biosynthesis; L-tryptophan from chorismate: step 5/5. The alpha subunit is responsible for the aldol cleavage of indoleglycerol phosphate to indole and glyceraldehyde 3-phosphate. This is Tryptophan synthase alpha chain from Geotalea uraniireducens (strain Rf4) (Geobacter uraniireducens).